The chain runs to 384 residues: Somatostatin receptor type 4 (384 aa).

The tract at residues 1-34 (MNTPATLPLGGEDTTWTPGINASWAPDEEEDAVR) is disordered. The Extracellular segment spans residues 1–41 (MNTPATLPLGGEDTTWTPGINASWAPDEEEDAVRSDGTGTA). An N-linked (GlcNAc...) asparagine glycan is attached at Asn21. Residues 42-69 (GMVTIQCIYALVCLVGLVGNALVIFVIL) traverse the membrane as a helical segment. Residues 70–79 (RYAKMKTATN) lie on the Cytoplasmic side of the membrane. Residues 80-105 (IYLLNLAVADELFMLSVPFVASAAAL) form a helical membrane-spanning segment. Residues 106–116 (RHWPFGAVLCR) are Extracellular-facing. Cys115 and Cys194 are joined by a disulfide. Residues 117–138 (AVLSVDGLNMFTSVFCLTVLSV) traverse the membrane as a helical segment. Residues 139–160 (DRYVAVVHPLRAATYRRPSVAK) lie on the Cytoplasmic side of the membrane. The helical transmembrane segment at 161–181 (LINLGVWLASLLVTLPIAVFA) threads the bilayer. The Extracellular segment spans residues 182 to 203 (DTRPARGGEAVACNLHWPHPAW). Residues 204–228 (SAVFVIYTFLLGFLLPVLAIGLCYL) form a helical membrane-spanning segment. Topologically, residues 229–254 (LIVGKMRAVALRAGWQQRRRSEKKIT) are cytoplasmic. A helical membrane pass occupies residues 255-280 (RLVLMVVTVFVLCWMPFYVVQLLNLF). Topologically, residues 281 to 287 (VTSLDAT) are extracellular. The chain crosses the membrane as a helical span at residues 288 to 311 (VNHVSLILSYANSCANPILYGFLS). Residues 312–384 (DNFRRSFQRV…RVPFTKTTTF (73 aa)) are Cytoplasmic-facing. The S-palmitoyl cysteine moiety is linked to residue Cys323.

The protein belongs to the G-protein coupled receptor 1 family. As to expression, brain, lung, heart and islets. Moderate levels in the hippocampus, cortex and olfactory bulb.

The protein localises to the cell membrane. Its function is as follows. Receptor for somatostatin-14. The activity of this receptor is mediated by G proteins which inhibits adenylyl cyclase. It is functionally coupled not only to inhibition of adenylate cyclase, but also to activation of both arachidonate release and mitogen-activated protein (MAP) kinase cascade. This is Somatostatin receptor type 4 (Sstr4) from Rattus norvegicus (Rat).